Reading from the N-terminus, the 81-residue chain is Small ribosomal subunit protein eS21 (81 aa).

It belongs to the eukaryotic ribosomal protein eS21 family.

In Zea mays (Maize), this protein is Small ribosomal subunit protein eS21 (RPS21).